A 185-amino-acid chain; its full sequence is Translation initiation factor IF-3, chloroplastic (185 aa).

Belongs to the IF-3 family. In terms of assembly, monomer.

Its subcellular location is the plastid. It localises to the chloroplast. Functionally, IF-3 binds to the 30S ribosomal subunit and shifts the equilibrium between 70S ribosomes and their 50S and 30S subunits in favor of the free subunits, thus enhancing the availability of 30S subunits on which protein synthesis initiation begins. The chain is Translation initiation factor IF-3, chloroplastic from Cyanidium caldarium (Red alga).